Consider the following 395-residue polypeptide: Nuclear hormone receptor family member nhr-10 (395 aa).

A DNA-binding region (nuclear receptor) is located at residues 15–90 (EEVCLVCSDI…VGMDRNAIQQ (76 aa)). 2 NR C4-type zinc fingers span residues 18-38 (CLVC…CNGC) and 54-78 (CQFQ…FEKC). The NR LBD domain maps to 152–392 (PSRTLIEAVV…TFAKQLLFGI (241 aa)).

It belongs to the nuclear hormone receptor family.

It is found in the nucleus. Functionally, probable transcription factor that acts in a feed-forward loop with nhr-68 to activate genes involved in the vitamin B12-independent breakdown of the short-chain fatty acid propionate. This pathway is triggered in response to a diet low in vitamin B12, when canonical vitamin B12-dependent propionate breakdown cannot function; the resulting accumulation of propionate is probably sensed by nhr-10 and/or nhr-68. The sequence is that of Nuclear hormone receptor family member nhr-10 (nhr-10) from Caenorhabditis elegans.